A 203-amino-acid polypeptide reads, in one-letter code: ATP-dependent Clp protease proteolytic subunit 2 (203 aa).

Ser98 functions as the Nucleophile in the catalytic mechanism. Residue His123 is part of the active site.

This sequence belongs to the peptidase S14 family. In terms of assembly, fourteen ClpP subunits assemble into 2 heptameric rings which stack back to back to give a disk-like structure with a central cavity, resembling the structure of eukaryotic proteasomes.

Its subcellular location is the cytoplasm. The enzyme catalyses Hydrolysis of proteins to small peptides in the presence of ATP and magnesium. alpha-casein is the usual test substrate. In the absence of ATP, only oligopeptides shorter than five residues are hydrolyzed (such as succinyl-Leu-Tyr-|-NHMec, and Leu-Tyr-Leu-|-Tyr-Trp, in which cleavage of the -Tyr-|-Leu- and -Tyr-|-Trp bonds also occurs).. In terms of biological role, cleaves peptides in various proteins in a process that requires ATP hydrolysis. Has a chymotrypsin-like activity. Plays a major role in the degradation of misfolded proteins. This Chlamydia pneumoniae (Chlamydophila pneumoniae) protein is ATP-dependent Clp protease proteolytic subunit 2.